Consider the following 876-residue polypeptide: Alanine--tRNA ligase (876 aa).

Zn(2+) contacts are provided by histidine 568, histidine 572, cysteine 670, and histidine 674.

This sequence belongs to the class-II aminoacyl-tRNA synthetase family. Zn(2+) serves as cofactor.

The protein localises to the cytoplasm. The enzyme catalyses tRNA(Ala) + L-alanine + ATP = L-alanyl-tRNA(Ala) + AMP + diphosphate. Its function is as follows. Catalyzes the attachment of alanine to tRNA(Ala) in a two-step reaction: alanine is first activated by ATP to form Ala-AMP and then transferred to the acceptor end of tRNA(Ala). Also edits incorrectly charged Ser-tRNA(Ala) and Gly-tRNA(Ala) via its editing domain. The protein is Alanine--tRNA ligase of Geotalea uraniireducens (strain Rf4) (Geobacter uraniireducens).